Here is a 371-residue protein sequence, read N- to C-terminus: tRNA-specific 2-thiouridylase MnmA (371 aa).

Residues 14–21 (GMSGGVDS) and M40 each bind ATP. The tract at residues 100–102 (NPD) is interaction with target base in tRNA. Catalysis depends on C105, which acts as the Nucleophile. Residues C105 and C201 are joined by a disulfide bond. An ATP-binding site is contributed by G129. Residues 151–153 (KDQ) form an interaction with tRNA region. The active-site Cysteine persulfide intermediate is the C201. The tract at residues 309-310 (RY) is interaction with tRNA.

The protein belongs to the MnmA/TRMU family.

It localises to the cytoplasm. The enzyme catalyses S-sulfanyl-L-cysteinyl-[protein] + uridine(34) in tRNA + AH2 + ATP = 2-thiouridine(34) in tRNA + L-cysteinyl-[protein] + A + AMP + diphosphate + H(+). In terms of biological role, catalyzes the 2-thiolation of uridine at the wobble position (U34) of tRNA, leading to the formation of s(2)U34. The protein is tRNA-specific 2-thiouridylase MnmA of Halalkalibacterium halodurans (strain ATCC BAA-125 / DSM 18197 / FERM 7344 / JCM 9153 / C-125) (Bacillus halodurans).